The following is a 478-amino-acid chain: Isoeugenol monooxygenase (478 aa).

Fe cation-binding residues include H167, H218, H282, and H471.

It belongs to the carotenoid oxygenase family. Monomer. Requires Fe(2+) as cofactor.

The enzyme catalyses (E)-isoeugenol + O2 = vanillin + acetaldehyde. Its activity is regulated as follows. Inhibited by HgCl(2), AgNO(3), CuCl(2), phenylhydrazine, 8-hydroxyquinoline, R-cycloserine and p-chloromercuribenzoic acid. Functionally, involved in isoeugenol degradation. Catalyzes the oxidative cleavage of the side chain double-bond of isoeugenol to form vanillin and acetaldehyde. This chain is Isoeugenol monooxygenase, found in Pseudomonas putida (Arthrobacter siderocapsulatus).